Reading from the N-terminus, the 179-residue chain is uncharacterized protein (179 aa).

Helical transmembrane passes span 33–53, 63–83, 89–109, and 115–135; these read HIIALASKIAFTLALLYVILD, VMFIALFLGFVSYLSGDMLVL, ITASLADFGLSFVILWVFVLT, and FSPFGAALLSAACLTVFEYFF.

It is found in the cell membrane. This is an uncharacterized protein from Bacillus subtilis (strain 168).